A 160-amino-acid polypeptide reads, in one-letter code: uncharacterized protein (160 aa).

Positions 1-29 are cleaved as a signal peptide; the sequence is MCGLGIVPMVKPALFGMLILVIGTSTVQA.

This is an uncharacterized protein from Sinorhizobium fredii (strain NBRC 101917 / NGR234).